The sequence spans 127 residues: UPF0716 protein YtzA (127 aa).

A run of 4 helical transmembrane segments spans residues 3–22 (FLFLLFIVFPAIEIGIFLFL), 26–46 (IGILPTVLFMILTGIIGAAAA), 70–90 (AIADGLCIFIGGLLLMLPGFL), and 93–115 (LAGACLLIPFTRGWCKPILFKWL).

This sequence belongs to the UPF0716 (FxsA) family.

The protein localises to the cell membrane. The chain is UPF0716 protein YtzA (ytzA) from Bacillus subtilis (strain 168).